An 858-amino-acid chain; its full sequence is GDP-fucose protein O-fucosyltransferase 2 (858 aa).

Over 1 to 150 the chain is Cytoplasmic; that stretch reads MHCQLGGQAR…RPPCLLNHRR (150 aa). A helical; Signal-anchor for type II membrane protein transmembrane segment spans residues 151 to 171; that stretch reads LLLGLVSVLTVFLSCLPFTNA. At 172–858 the chain is on the lumenal side; that stretch reads TVSPAALQDV…WPSLDPSSTL (687 aa). 237-241 is a binding site for GDP-beta-L-fucose; that stretch reads GEGFH. The active-site Proton acceptor is the glutamate 238. The tract at residues 448-510 is disordered; it reads AALTPQERQR…SRSRKEIQEE (63 aa). Positions 486-510 are enriched in basic and acidic residues; the sequence is DGEREKRKPGRRSDTSRSRKEIQEE. GDP-beta-L-fucose is bound by residues 646 to 648 and 787 to 788; these read HLR and RF. Positions 819–858 are disordered; sequence TGGQAQGKCFATKSHDPPEGRSRSELRRKYWPSLDPSSTL. Residues 831-846 are compositionally biased toward basic and acidic residues; the sequence is KSHDPPEGRSRSELRR.

This sequence belongs to the glycosyltransferase 68 family.

The protein localises to the endoplasmic reticulum membrane. It catalyses the reaction L-seryl-[protein] + GDP-beta-L-fucose = 3-O-(alpha-L-fucosyl)-L-seryl-[protein] + GDP + H(+). The enzyme catalyses L-threonyl-[protein] + GDP-beta-L-fucose = 3-O-(alpha-L-fucosyl)-L-threonyl-[protein] + GDP + H(+). The protein operates within protein modification; protein glycosylation. Functionally, catalyzes the reaction that attaches fucose through an O-glycosidic linkage to a conserved serine or threonine residue in the consensus sequence C1-X-X-S/T-C2 of thrombospondin type I repeats (TSRs) where C1 and C2 are the first and second cysteines of the repeat, respectively. O-fucosylates microneme protein MIC2 and may play a role in its stabilization. Probably by regulating protein O-fucosylation, may play a role in tachyzoite adhesion to and/or invasion of host cells; however, POFUT2 involvement in adhesion/invasion is controversial. This chain is GDP-fucose protein O-fucosyltransferase 2, found in Toxoplasma gondii (strain ATCC 50853 / GT1).